Reading from the N-terminus, the 456-residue chain is ATP synthase subunit beta 1 (456 aa).

152–159 (GGAGVGKS) lines the ATP pocket.

It belongs to the ATPase alpha/beta chains family. F-type ATPases have 2 components, CF(1) - the catalytic core - and CF(0) - the membrane proton channel. CF(1) has five subunits: alpha(3), beta(3), gamma(1), delta(1), epsilon(1). CF(0) has three main subunits: a(1), b(2) and c(9-12). The alpha and beta chains form an alternating ring which encloses part of the gamma chain. CF(1) is attached to CF(0) by a central stalk formed by the gamma and epsilon chains, while a peripheral stalk is formed by the delta and b chains.

It localises to the cell membrane. It catalyses the reaction ATP + H2O + 4 H(+)(in) = ADP + phosphate + 5 H(+)(out). Produces ATP from ADP in the presence of a proton gradient across the membrane. The catalytic sites are hosted primarily by the beta subunits. This chain is ATP synthase subunit beta 1, found in Listeria monocytogenes serovar 1/2a (strain ATCC BAA-679 / EGD-e).